The primary structure comprises 194 residues: Dephospho-CoA kinase (194 aa).

One can recognise a DPCK domain in the interval 3 to 194 (IVGLTGSIGM…RAIVDDLRAG (192 aa)). 11–16 (GMGKST) provides a ligand contact to ATP.

This sequence belongs to the CoaE family.

The protein localises to the cytoplasm. It catalyses the reaction 3'-dephospho-CoA + ATP = ADP + CoA + H(+). It participates in cofactor biosynthesis; coenzyme A biosynthesis; CoA from (R)-pantothenate: step 5/5. Catalyzes the phosphorylation of the 3'-hydroxyl group of dephosphocoenzyme A to form coenzyme A. In Rhizobium meliloti (strain 1021) (Ensifer meliloti), this protein is Dephospho-CoA kinase.